We begin with the raw amino-acid sequence, 448 residues long: MHFIAISINHRTADVALREQVAFRDDALRLAHEDLFETKSILENVILSTCNRTEVYAIVDQIHTGRYYIQRFLARSFGFDVDDIKNMSEVKVGDEAVEHLLRVTSGLDSIVLGETQILGQMRDAFFLAQDIQTTGTIFNHLFKQAITFAKKAHNETDIADNAVSVSYAAVELAKKVFGKLKGKQTIIIGAGEMSELSLLNLLGSGIDDITVVNRTETNAYKLATKHGVNYNTLESLPTLLTNADIVISSTSSPDFIVTKSMIESVNLKRKASSLLLIDIAVPRDIEPNVNISENIFSYDVDDLKGLVDANLRERQMAADFIASQIPDEVQAHNDWVNMLGVVPVIRALREKAMTIQSETMDSIDRKLPDLSDRERTIISKHTKSIINQMLKDPIKQAKELSNDKRSNEKLELFQNIFDIDAADPYEDIKAHKAQKEKEVSIRHIFSFE.

Substrate contacts are provided by residues 49–52, serine 109, 114–116, and glutamine 120; these read TCNR and ETQ. Cysteine 50 functions as the Nucleophile in the catalytic mechanism. 189-194 lines the NADP(+) pocket; it reads GAGEMS.

This sequence belongs to the glutamyl-tRNA reductase family. In terms of assembly, homodimer.

It carries out the reaction (S)-4-amino-5-oxopentanoate + tRNA(Glu) + NADP(+) = L-glutamyl-tRNA(Glu) + NADPH + H(+). Its pathway is porphyrin-containing compound metabolism; protoporphyrin-IX biosynthesis; 5-aminolevulinate from L-glutamyl-tRNA(Glu): step 1/2. Catalyzes the NADPH-dependent reduction of glutamyl-tRNA(Glu) to glutamate 1-semialdehyde (GSA). This Staphylococcus haemolyticus (strain JCSC1435) protein is Glutamyl-tRNA reductase.